Reading from the N-terminus, the 150-residue chain is Cell division protein SepF (150 aa).

The tract at residues 26-45 (DREEIPEEHESKDRTAYQSK) is disordered.

It belongs to the SepF family. In terms of assembly, homodimer. Interacts with FtsZ.

It is found in the cytoplasm. Functionally, cell division protein that is part of the divisome complex and is recruited early to the Z-ring. Probably stimulates Z-ring formation, perhaps through the cross-linking of FtsZ protofilaments. Its function overlaps with FtsA. This is Cell division protein SepF from Bacillus licheniformis (strain ATCC 14580 / DSM 13 / JCM 2505 / CCUG 7422 / NBRC 12200 / NCIMB 9375 / NCTC 10341 / NRRL NRS-1264 / Gibson 46).